The chain runs to 416 residues: Secreted RxLR effector protein 25 (416 aa).

The signal sequence occupies residues 1–20; it reads MRSWLLLLVGLSSYFALSTS. Residues 49-88 carry the RxLR-dEER motif; it reads RKLRAPGGDTNTLKDSGKARREKKVWKLFCRVFLQLDDEK.

Belongs to the RxLR effector family.

Its subcellular location is the secreted. It localises to the host cytoplasm. The protein localises to the host nucleus. Its function is as follows. Effector that partially suppresses the tobacco programmed cell death induced by cell death-inducing proteins. The chain is Secreted RxLR effector protein 25 from Plasmopara viticola (Downy mildew of grapevine).